A 396-amino-acid polypeptide reads, in one-letter code: Purine ribonucleoside efflux pump NepI (396 aa).

Over M1–A21 the chain is Cytoplasmic. Residues V22–L42 form a helical membrane-spanning segment. The Periplasmic segment spans residues L43–E54. Residues G55–I75 traverse the membrane as a helical segment. The Cytoplasmic portion of the chain corresponds to T76–R85. Residues Y86–N106 form a helical membrane-spanning segment. A topological domain (periplasmic) is located at residue S107. The helical transmembrane segment at F108–M128 threads the bilayer. At S129–S147 the chain is on the cytoplasmic side. Residues V148 to G168 form a helical membrane-spanning segment. The Periplasmic portion of the chain corresponds to E169–N175. A helical transmembrane segment spans residues V176 to P196. Residues S197 to R215 are Cytoplasmic-facing. A helical membrane pass occupies residues P216–F236. The Periplasmic portion of the chain corresponds to T237 to T255. A helical membrane pass occupies residues L256–L276. At K277–K281 the chain is on the cytoplasmic side. Residues L282–G302 traverse the membrane as a helical segment. Residues S303 to K305 are Periplasmic-facing. The helical transmembrane segment at I306–W326 threads the bilayer. Topologically, residues S327 to S343 are cytoplasmic. The chain crosses the membrane as a helical span at residues I344 to L364. Over D365–N366 the chain is Periplasmic. A helical membrane pass occupies residues I367 to V387. The Cytoplasmic segment spans residues T388–S396.

This sequence belongs to the major facilitator superfamily. DHA1 family. NepI (TC 2.A.1.2.26) subfamily.

The protein resides in the cell inner membrane. The enzyme catalyses inosine(in) + H(+)(out) = inosine(out) + H(+)(in). The catalysed reaction is guanosine(in) + H(+)(out) = guanosine(out) + H(+)(in). Involved in the efflux of purine ribonucleosides, such as inosine and guanosine. This is Purine ribonucleoside efflux pump NepI from Escherichia coli O1:K1 / APEC.